We begin with the raw amino-acid sequence, 130 residues long: Gonadotropin subunit beta-1 (130 aa).

Residues 1–18 (MRMHFVVMVMLLPALMMA) form the signal peptide. Intrachain disulfides connect Cys-26/Cys-74, Cys-40/Cys-89, Cys-51/Cys-105, Cys-55/Cys-107, and Cys-110/Cys-117. Asn-30 carries N-linked (GlcNAc...) asparagine glycosylation.

Belongs to the glycoprotein hormones subunit beta family. As to quaternary structure, heterodimer of an alpha and a beta chain.

Its subcellular location is the secreted. Its function is as follows. Involved in gametogenesis and steroidogenesis. The chain is Gonadotropin subunit beta-1 (cgba) from Cyprinus carpio (Common carp).